A 531-amino-acid chain; its full sequence is Dimethylnonatriene synthase (531 aa).

The helical transmembrane segment at threonine 6–alanine 26 threads the bilayer. Cysteine 464 is a heme binding site.

Belongs to the cytochrome P450 family. Requires heme as cofactor.

It localises to the membrane. The enzyme catalyses (6E,10E)-geranyllinalool + reduced [NADPH--hemoprotein reductase] + O2 = (3E,7E)-4,8,12-trimethyltrideca 1,3,7,11-tetraene + but-3-en-2-one + oxidized [NADPH--hemoprotein reductase] + 2 H2O + H(+). The catalysed reaction is (3S,6E)-nerolidol + reduced [NADPH--hemoprotein reductase] + O2 = (3E)-4,8-dimethylnona-1,3,7-triene + but-3-en-2-one + oxidized [NADPH--hemoprotein reductase] + 2 H2O + H(+). Its pathway is secondary metabolite biosynthesis; terpenoid biosynthesis. In terms of biological role, involved in the biosynthesis of homoterpenes, attractants of herbivores parasitoids and predators (e.g. predatory mites and parasitoid wasps). Component of the volatile terpenes biosynthesis pathways. Converts mainly nerolidol to dimethylnonatriene (DMNT) and, to a lower extent, geranyllinalool to trimethyltridecatetraene (TMTT). The sequence is that of Dimethylnonatriene synthase from Zea mays (Maize).